Here is a 227-residue protein sequence, read N- to C-terminus: Thiamine-phosphate synthase (227 aa).

4-amino-2-methyl-5-(diphosphooxymethyl)pyrimidine contacts are provided by residues 50-54 (QFRQK) and D82. 2 residues coordinate Mg(2+): D83 and D102. T121 contacts 4-amino-2-methyl-5-(diphosphooxymethyl)pyrimidine. 147-149 (TTS) contacts 2-[(2R,5Z)-2-carboxy-4-methylthiazol-5(2H)-ylidene]ethyl phosphate. Residue K150 coordinates 4-amino-2-methyl-5-(diphosphooxymethyl)pyrimidine. Residues G178 and 198 to 199 (LS) each bind 2-[(2R,5Z)-2-carboxy-4-methylthiazol-5(2H)-ylidene]ethyl phosphate.

This sequence belongs to the thiamine-phosphate synthase family. Requires Mg(2+) as cofactor.

It carries out the reaction 2-[(2R,5Z)-2-carboxy-4-methylthiazol-5(2H)-ylidene]ethyl phosphate + 4-amino-2-methyl-5-(diphosphooxymethyl)pyrimidine + 2 H(+) = thiamine phosphate + CO2 + diphosphate. It catalyses the reaction 2-(2-carboxy-4-methylthiazol-5-yl)ethyl phosphate + 4-amino-2-methyl-5-(diphosphooxymethyl)pyrimidine + 2 H(+) = thiamine phosphate + CO2 + diphosphate. The catalysed reaction is 4-methyl-5-(2-phosphooxyethyl)-thiazole + 4-amino-2-methyl-5-(diphosphooxymethyl)pyrimidine + H(+) = thiamine phosphate + diphosphate. The protein operates within cofactor biosynthesis; thiamine diphosphate biosynthesis; thiamine phosphate from 4-amino-2-methyl-5-diphosphomethylpyrimidine and 4-methyl-5-(2-phosphoethyl)-thiazole: step 1/1. Condenses 4-methyl-5-(beta-hydroxyethyl)thiazole monophosphate (THZ-P) and 2-methyl-4-amino-5-hydroxymethyl pyrimidine pyrophosphate (HMP-PP) to form thiamine monophosphate (TMP). The protein is Thiamine-phosphate synthase of Salinibacter ruber (strain DSM 13855 / M31).